The primary structure comprises 183 residues: NEDD8-conjugating enzyme Ubc12 (183 aa).

Methionine 1 bears the N-acetylmethionine mark. Residues 1–29 (MIKLFSLKQQKKEEESAGGTKGSSKKASA) are disordered. The tract at residues 1–57 (MIKLFSLKQQKKEEESAGGTKGSSKKASAAQLRIQKDINELNLPKTCDISFSDPDDL) is interaction with UBA3. Lysine 3 carries the post-translational modification N6-acetyllysine. Residues 29–173 (AAQLRIQKDI…VQRSMRGGYI (145 aa)) form the UBC core domain. The residue at position 50 (serine 50) is a Phosphoserine. Cysteine 111 serves as the catalytic Glycyl thioester intermediate. Arginine 169 is modified (asymmetric dimethylarginine; alternate). Arginine 169 bears the Omega-N-methylarginine; alternate mark.

Belongs to the ubiquitin-conjugating enzyme family. UBC12 subfamily. As to quaternary structure, interacts with UBA3 and RBX1. Interacts (N-terminally acetylated form) with (via DCUN1 domain) DCUN1D1, DCUN1D2, DCUN1D3, DCUN1D4 and DCUN1D5. In terms of processing, the acetylation of Met-1 increases affinity for DCUN1D1 by about 2 orders of magnitude and is crucial for NEDD8 transfer to cullins.

The catalysed reaction is [E1 NEDD8-activating enzyme]-S-[NEDD8 protein]-yl-L-cysteine + [E2 NEDD8-conjugating enzyme]-L-cysteine = [E1 NEDD8-activating enzyme]-L-cysteine + [E2 NEDD8-conjugating enzyme]-S-[NEDD8-protein]-yl-L-cysteine.. The protein operates within protein modification; protein neddylation. Functionally, accepts the ubiquitin-like protein NEDD8 from the UBA3-NAE1 E1 complex and catalyzes its covalent attachment to other proteins. The specific interaction with the E3 ubiquitin ligase RBX1, but not RBX2, suggests that the RBX1-UBE2M complex neddylates specific target proteins, such as CUL1, CUL2, CUL3 and CUL4. Involved in cell proliferation. This chain is NEDD8-conjugating enzyme Ubc12 (Ube2m), found in Mus musculus (Mouse).